Consider the following 360-residue polypeptide: Protein Wnt-5b (360 aa).

Residues 1 to 16 (MTPILRLLLLSSLLSC) form the signal peptide. A disulfide bridge links C84 with C95. N-linked (GlcNAc...) asparagine glycosylation is found at N94 and N100. Disulfide bonds link C134–C142, C144–C162, C218–C232, C220–C227, C289–C320, C305–C315, C319–C359, C335–C350, C337–C347, and C342–C343. S224 carries the O-palmitoleoyl serine; by PORCN lipid modification. N-linked (GlcNAc...) asparagine glycosylation is found at N292 and N306.

Belongs to the Wnt family. Post-translationally, palmitoleoylation is required for efficient binding to frizzled receptors. Depalmitoleoylation leads to Wnt signaling pathway inhibition.

Its subcellular location is the secreted. The protein localises to the extracellular space. It localises to the extracellular matrix. Functionally, ligand for members of the frizzled family of seven transmembrane receptors. Probable developmental protein. May be a signaling molecule which affects the development of discrete regions of tissues. Is likely to signal over only few cell diameters. The chain is Protein Wnt-5b (wnt5b) from Xenopus laevis (African clawed frog).